The chain runs to 261 residues: Imidazole glycerol phosphate synthase subunit HisF (261 aa).

Residues aspartate 11 and aspartate 130 contribute to the active site.

This sequence belongs to the HisA/HisF family. In terms of assembly, heterodimer of HisH and HisF.

It localises to the cytoplasm. The catalysed reaction is 5-[(5-phospho-1-deoxy-D-ribulos-1-ylimino)methylamino]-1-(5-phospho-beta-D-ribosyl)imidazole-4-carboxamide + L-glutamine = D-erythro-1-(imidazol-4-yl)glycerol 3-phosphate + 5-amino-1-(5-phospho-beta-D-ribosyl)imidazole-4-carboxamide + L-glutamate + H(+). Its pathway is amino-acid biosynthesis; L-histidine biosynthesis; L-histidine from 5-phospho-alpha-D-ribose 1-diphosphate: step 5/9. In terms of biological role, IGPS catalyzes the conversion of PRFAR and glutamine to IGP, AICAR and glutamate. The HisF subunit catalyzes the cyclization activity that produces IGP and AICAR from PRFAR using the ammonia provided by the HisH subunit. In Limosilactobacillus fermentum (strain NBRC 3956 / LMG 18251) (Lactobacillus fermentum), this protein is Imidazole glycerol phosphate synthase subunit HisF.